Here is a 362-residue protein sequence, read N- to C-terminus: Malate dehydrogenase (362 aa).

This sequence belongs to the LDH2/MDH2 oxidoreductase family. As to quaternary structure, homodimer.

The protein localises to the cytoplasm. It carries out the reaction (S)-malate + NAD(+) = oxaloacetate + NADH + H(+). In Pyrococcus abyssi (strain GE5 / Orsay), this protein is Malate dehydrogenase (mdh).